The primary structure comprises 235 residues: Probable transcriptional regulatory protein Cla_1081 (235 aa).

The protein belongs to the TACO1 family.

The protein localises to the cytoplasm. The protein is Probable transcriptional regulatory protein Cla_1081 of Campylobacter lari (strain RM2100 / D67 / ATCC BAA-1060).